The sequence spans 196 residues: NAD(P)H-quinone oxidoreductase subunit I (196 aa).

2 4Fe-4S ferredoxin-type domains span residues 54–83 (GRIH…VDWV) and 94–123 (KHYS…VTEE). [4Fe-4S] cluster-binding residues include cysteine 63, cysteine 66, cysteine 69, cysteine 73, cysteine 103, cysteine 106, cysteine 109, and cysteine 113. Residues 174-196 (PAGAQRAGERPEAIANTAKSSEN) are disordered.

The protein belongs to the complex I 23 kDa subunit family. NDH-1 is composed of at least 11 different subunits. It depends on [4Fe-4S] cluster as a cofactor.

Its subcellular location is the cellular thylakoid membrane. The enzyme catalyses a plastoquinone + NADH + (n+1) H(+)(in) = a plastoquinol + NAD(+) + n H(+)(out). The catalysed reaction is a plastoquinone + NADPH + (n+1) H(+)(in) = a plastoquinol + NADP(+) + n H(+)(out). NDH-1 shuttles electrons from an unknown electron donor, via FMN and iron-sulfur (Fe-S) centers, to quinones in the respiratory and/or the photosynthetic chain. The immediate electron acceptor for the enzyme in this species is believed to be plastoquinone. Couples the redox reaction to proton translocation, and thus conserves the redox energy in a proton gradient. The polypeptide is NAD(P)H-quinone oxidoreductase subunit I (Thermosynechococcus vestitus (strain NIES-2133 / IAM M-273 / BP-1)).